A 225-amino-acid polypeptide reads, in one-letter code: 3-dehydroquinate dehydratase (225 aa).

Residues serine 6, 30–32, and arginine 62 each bind 3-dehydroquinate; that span reads EWR. Histidine 118 functions as the Proton donor/acceptor in the catalytic mechanism. Lysine 143 serves as the catalytic Schiff-base intermediate with substrate. The 3-dehydroquinate site is built by arginine 186, serine 205, and glutamine 209.

Belongs to the type-I 3-dehydroquinase family. In terms of assembly, homodimer.

The enzyme catalyses 3-dehydroquinate = 3-dehydroshikimate + H2O. It participates in metabolic intermediate biosynthesis; chorismate biosynthesis; chorismate from D-erythrose 4-phosphate and phosphoenolpyruvate: step 3/7. In terms of biological role, involved in the third step of the chorismate pathway, which leads to the biosynthesis of aromatic amino acids. Catalyzes the cis-dehydration of 3-dehydroquinate (DHQ) and introduces the first double bond of the aromatic ring to yield 3-dehydroshikimate. In Streptococcus sanguinis (strain SK36), this protein is 3-dehydroquinate dehydratase.